The chain runs to 435 residues: UPF0761 membrane protein mma_2179 (435 aa).

6 helical membrane-spanning segments follow: residues 45–65 (VLALVPILTIALAIFTTFPLF), 103–123 (LSAFGAVALIVTAVAMMLMID), 142–162 (ILVYWAIVTLGPLLIGASMTF), 177–197 (VPFVGAVFYTSISILLSMVAF), 208–228 (LVEWRDAVVGGLLAAIAFEIV), and 252–272 (FPIFLVWVYLGWLITLAGAVV).

It belongs to the UPF0761 family.

The protein resides in the cell inner membrane. This is UPF0761 membrane protein mma_2179 from Janthinobacterium sp. (strain Marseille) (Minibacterium massiliensis).